Consider the following 340-residue polypeptide: 4-hydroxy-2-oxovalerate aldolase (340 aa).

The Pyruvate carboxyltransferase domain occupies V8–M260. R16 to D17 is a binding site for substrate. D17 contributes to the Mn(2+) binding site. Catalysis depends on H20, which acts as the Proton acceptor. Substrate-binding residues include S170 and H199. Mn(2+) is bound by residues H199 and H201. Residue Y290 coordinates substrate.

Belongs to the 4-hydroxy-2-oxovalerate aldolase family.

It catalyses the reaction (S)-4-hydroxy-2-oxopentanoate = acetaldehyde + pyruvate. This chain is 4-hydroxy-2-oxovalerate aldolase, found in Shewanella halifaxensis (strain HAW-EB4).